A 424-amino-acid polypeptide reads, in one-letter code: CinA-like protein (424 aa).

It belongs to the CinA family.

This chain is CinA-like protein, found in Nostoc sp. (strain PCC 7120 / SAG 25.82 / UTEX 2576).